Here is a 316-residue protein sequence, read N- to C-terminus: Nucleoprotein (316 aa).

Residues tyrosine 43, tyrosine 46, valine 76, arginine 122, and lysine 240 each contribute to the RNA site.

Belongs to the tenuiviruses nucleocapsid protein family.

It is found in the virion. Its subcellular location is the host cytoplasm. Its function is as follows. Encapsidates the genome, protecting it from nucleases. The encapsidated genomic RNA is termed the nucleocapsid (NC), and serves as template for viral transcription and replication. The chain is Nucleoprotein from Maize stripe virus (MStV).